A 231-amino-acid chain; its full sequence is Ribose-5-phosphate isomerase A (231 aa).

Substrate-binding positions include 32–35 (TGST), 85–88 (DGAD), and 98–101 (KGGG). Catalysis depends on E107, which acts as the Proton acceptor. K125 serves as a coordination point for substrate.

This sequence belongs to the ribose 5-phosphate isomerase family. In terms of assembly, homodimer.

It carries out the reaction aldehydo-D-ribose 5-phosphate = D-ribulose 5-phosphate. It participates in carbohydrate degradation; pentose phosphate pathway; D-ribose 5-phosphate from D-ribulose 5-phosphate (non-oxidative stage): step 1/1. In terms of biological role, catalyzes the reversible conversion of ribose-5-phosphate to ribulose 5-phosphate. The protein is Ribose-5-phosphate isomerase A of Paraburkholderia phymatum (strain DSM 17167 / CIP 108236 / LMG 21445 / STM815) (Burkholderia phymatum).